The chain runs to 165 residues: E3 ubiquitin ligase complex SCF subunit sconC (165 aa).

Residues 106 to 165 (ILAANYLDIKALLDVGCKTVANMIKGKSPEEIRKTFNIQNDFTPEEEDQIRRENEWAEDR) are interaction with the F-box domain of F-box proteins.

Belongs to the SKP1 family. In terms of assembly, component of the SCF (SKP1-CUL1-F-box protein) E3 ubiquitin ligase complexes.

It participates in protein modification; protein ubiquitination. Essential component of the SCF (SKP1-CUL1-F-box protein) E3 ubiquitin ligase complexes, which mediate the ubiquitination and subsequent proteasomal degradation of target proteins. Controls sulfur metabolite repression, probably by mediating the inactivation or degradation of the metR transcription factor. The protein is E3 ubiquitin ligase complex SCF subunit sconC (sconC) of Arthroderma otae (strain ATCC MYA-4605 / CBS 113480) (Microsporum canis).